A 518-amino-acid chain; its full sequence is Major facilitator superfamily domain-containing protein 8 (518 aa).

The tract at residues 1–20 (MAGLRNESEQEPLLGDTPGS) is disordered. Topologically, residues 1–40 (MAGLRNESEQEPLLGDTPGSREWDILETEEHYKSRWRSIR) are cytoplasmic. Residues 13–14 (LL) carry the Dileucine internalization motif motif. Residues 41–61 (ILYLTMFLSSVGFSVVMMSIW) form a helical membrane-spanning segment. Over 62–74 (PYLQKIDPTADTS) the chain is Extracellular. A helical transmembrane segment spans residues 75–95 (FLGWVIASYSLGQMVASPIFG). The Cytoplasmic portion of the chain corresponds to 96–105 (LWSNYRPRKE). The helical transmembrane segment at 106–126 (PLIVSILISVAANCLYAYLHI) threads the bilayer. Over 127-131 (PASHN) the chain is Extracellular. A helical transmembrane segment spans residues 132 to 152 (KYYMLVARGLLGIGAGNVAVV). Residues 153 to 173 (RSYTAGATSLQERTSSMANIS) lie on the Cytoplasmic side of the membrane. The chain crosses the membrane as a helical span at residues 174 to 194 (MCQALGFILGPVFQTCFTFLG). The Extracellular segment spans residues 195–211 (EKGVTWDVIKLQINMYT). A helical transmembrane segment spans residues 212 to 232 (TPVLLSAFLGILNIILILAIL). Residues 233–266 (REHRVDDSGRQCKSINFEEASTDEAQVPQGNIDQ) are Cytoplasmic-facing. Residues 267–287 (VAVVAINVLFFVTLFIFALFE) traverse the membrane as a helical segment. Over 288–304 (TIITPLTMDMYAWTQEQ) the chain is Extracellular. Residues 305-325 (AVLYNGIILAALGVEAVVIFL) traverse the membrane as a helical segment. Topologically, residues 326–337 (GVKLLSKKIGER) are cytoplasmic. A helical transmembrane segment spans residues 338 to 358 (AILLGGLIVVWVGFFILLPWG). The Extracellular portion of the chain corresponds to 359-412 (NQFPKIQWEDLHNNSIPNTTFGEIIIGLWKSPMEDDNERPTGCSIEQAWCLYTP). 2 N-linked (GlcNAc...) asparagine glycosylation sites follow: N371 and N376. Residues 413-433 (VIHLAQFLTSAVLIGLGYPVC) form a helical membrane-spanning segment. Residues 434 to 451 (NLMSYTLYSKILGPKPQG) lie on the Cytoplasmic side of the membrane. A helical membrane pass occupies residues 452–472 (VYMGWLTASGSGARILGPMFI). At 473 to 482 (SQVYAHWGPR) the chain is on the extracellular side. The chain crosses the membrane as a helical span at residues 483–503 (WAFSLVCGIIVLTITLLGVVY). Residues 504 to 518 (KRLIALSVRYGRIQE) are Cytoplasmic-facing.

The protein belongs to the major facilitator superfamily. In terms of tissue distribution, expressed at very low levels in all tissues tested.

The protein resides in the endosome membrane. The protein localises to the lysosome membrane. The catalysed reaction is chloride(in) = chloride(out). It carries out the reaction iodide(out) = iodide(in). The enzyme catalyses fluoride(in) = fluoride(out). Inhibited by chloride channel blockers 4,4'-diisothiocyano-2,2'-stilbenedisulfonate (DIDS), niflumic acid (NFA), and 5-Nitro-2-(3-phenylpropylamino) benzoic acid (NPPB). In terms of biological role, outward-rectifying chloride channel involved in endolysosomal chloride homeostasis, membrane fusion and function. Conducts chloride currents up to hundreds of picoamperes. Regulates lysosomal calcium content by reducing the lysosomal membrane potential, thereby activating TRPML1 channel and further release of lysosomal calcium ions. Regulates the pH in endolysosomal compartments and may contribute to progressive acidification from endosome to lysosome. Permeable to other halides such as iodide and fluoride ions. The protein is Major facilitator superfamily domain-containing protein 8 of Homo sapiens (Human).